We begin with the raw amino-acid sequence, 134 residues long: ATP synthase epsilon chain (134 aa).

This sequence belongs to the ATPase epsilon chain family. In terms of assembly, F-type ATPases have 2 components, CF(1) - the catalytic core - and CF(0) - the membrane proton channel. CF(1) has five subunits: alpha(3), beta(3), gamma(1), delta(1), epsilon(1). CF(0) has three main subunits: a, b and c.

The protein resides in the cellular thylakoid membrane. Its function is as follows. Produces ATP from ADP in the presence of a proton gradient across the membrane. This is ATP synthase epsilon chain from Prochlorococcus marinus (strain AS9601).